The chain runs to 382 residues: Methylthioribose-1-phosphate isomerase (382 aa).

Asp258 acts as the Proton donor in catalysis.

This sequence belongs to the eIF-2B alpha/beta/delta subunits family. MtnA subfamily.

It is found in the cytoplasm. Its subcellular location is the nucleus. It catalyses the reaction 5-(methylsulfanyl)-alpha-D-ribose 1-phosphate = 5-(methylsulfanyl)-D-ribulose 1-phosphate. The protein operates within amino-acid biosynthesis; L-methionine biosynthesis via salvage pathway; L-methionine from S-methyl-5-thio-alpha-D-ribose 1-phosphate: step 1/6. Its function is as follows. Catalyzes the interconversion of methylthioribose-1-phosphate (MTR-1-P) into methylthioribulose-1-phosphate (MTRu-1-P). The chain is Methylthioribose-1-phosphate isomerase from Laccaria bicolor (strain S238N-H82 / ATCC MYA-4686) (Bicoloured deceiver).